Consider the following 404-residue polypeptide: MKIVGAEVFVTCPGRNFVTLKITTDDGLVGLGDATLNGRELSVASYLKDHLCPQLIGRDAHRIEDIWQFFYKGAYWRRGPVTMSAISAVDMALWDIKAKAAGMPLYQLLGGASREGVMVYCHTTGHTIDDVLEDYARHKEMGFKAIRVQCGVPGMKTTYGMSKGKGLAYEPATKGDWPEEQLWSTEKYLDFTPKLFDAVRSKFGYDEHLLHDMHHRLTPIEAARFGKSIEEFRLFWMEDPTPAENQECFRLIRQHTVTPIAVGEVFNSIWDCKQLIEEQLIDYIRTTMTHAGGITGMRRIADFASLYQVRTGSHGPSDLSPICHAAALHFDLWVPNFGVQEYMGYSEQMLEVFPHSWTFDNGYMHPGEKPGLGIEFDEKLAAKYPYDPAYLPVARLEDGTLWNW.

Residues asparagine 37 and histidine 122 each coordinate substrate. Tyrosine 159 functions as the Proton donor/acceptor in the catalytic mechanism. Aspartate 212 provides a ligand contact to Mg(2+). The Proton donor/acceptor role is filled by histidine 214. Residues glutamate 238 and glutamate 264 each coordinate Mg(2+). Substrate-binding residues include glutamate 264, arginine 285, histidine 314, aspartate 318, and glutamate 341.

It belongs to the mandelate racemase/muconate lactonizing enzyme family. GalD subfamily. It depends on Mg(2+) as a cofactor.

It catalyses the reaction D-mannonate = 2-dehydro-3-deoxy-D-gluconate + H2O. Its function is as follows. Has low D-mannonate dehydratase activity (in vitro), suggesting that this is not a physiological substrate and that it has no significant role in D-mannonate degradation in vivo. Has no detectable activity with a panel of 70 other acid sugars (in vitro). In Enterobacter sp. (strain 638), this protein is D-galactonate dehydratase family member Ent638_1932.